The sequence spans 428 residues: AP-1 complex subunit mu (428 aa).

Ala2 carries the post-translational modification N-acetylalanine; partial. In terms of domain architecture, MHD spans 169–426; the sequence is KNEVFLDVVE…VCLSGDYQFR (258 aa).

The protein belongs to the adaptor complexes medium subunit family. Adaptor protein complex 1 (AP-1) is a heterotetramer composed of two large adaptins (gamma-type subunit and beta-type subunit), a medium adaptin (mu-type subunit) and a small adaptin (sigma-type subunit).

It is found in the golgi apparatus. It localises to the trans-Golgi network. The protein localises to the cytoplasmic vesicle. The protein resides in the clathrin-coated vesicle membrane. Subunit of clathrin-associated adaptor protein complex 1 that plays a role in protein sorting in the trans-Golgi network (TGN) and endosomes. The AP complexes mediate the recruitment of clathrin to membranes and the recognition of sorting signals within the cytosolic tails of transmembrane cargo molecules. Also involved in early steps of phagocytosis and macropinocytosis. This Dictyostelium discoideum (Social amoeba) protein is AP-1 complex subunit mu (apm1).